The sequence spans 176 residues: Dual-action ribosomal maturation protein DarP (176 aa).

Residues 1-16 show a composition bias toward acidic residues; that stretch reads MRLIDPDADLEFDPDS. Residues 1–29 are disordered; that stretch reads MRLIDPDADLEFDPDSVYDGPSKSQKKRE.

It belongs to the DarP family.

The protein localises to the cytoplasm. Functionally, member of a network of 50S ribosomal subunit biogenesis factors which assembles along the 30S-50S interface, preventing incorrect 23S rRNA structures from forming. Promotes peptidyl transferase center (PTC) maturation. The protein is Dual-action ribosomal maturation protein DarP of Thiobacillus denitrificans (strain ATCC 25259 / T1).